The sequence spans 424 residues: Adenylosuccinate synthetase 1 (424 aa).

Residues G12–K18 and G40–T42 each bind GTP. D13 (proton acceptor) is an active-site residue. Positions 13 and 40 each coordinate Mg(2+). Residues D13 to K16, N38 to H41, T127, R141, T236, and R304 each bind IMP. H41 (proton donor) is an active-site residue. A300–R306 contributes to the substrate binding site. Residues R306, K332–D334, and G413–G415 contribute to the GTP site.

This sequence belongs to the adenylosuccinate synthetase family. In terms of assembly, homodimer. It depends on Mg(2+) as a cofactor.

The protein localises to the cytoplasm. The catalysed reaction is IMP + L-aspartate + GTP = N(6)-(1,2-dicarboxyethyl)-AMP + GDP + phosphate + 2 H(+). It functions in the pathway purine metabolism; AMP biosynthesis via de novo pathway; AMP from IMP: step 1/2. Functionally, plays an important role in the de novo pathway of purine nucleotide biosynthesis. Catalyzes the first committed step in the biosynthesis of AMP from IMP. This chain is Adenylosuccinate synthetase 1, found in Methanosarcina acetivorans (strain ATCC 35395 / DSM 2834 / JCM 12185 / C2A).